Reading from the N-terminus, the 492-residue chain is Serine/threonine-protein kinase 3 (492 aa).

A Protein kinase domain is found at 26–277 (FDVLEKLGEG…ATQLLQHPFI (252 aa)). Residues 32–40 (LGEGSYGSV) and K55 each bind ATP. D145 acts as the Proton acceptor in catalysis. T179 bears the Phosphothreonine; by autocatalysis mark. Coiled coils occupy residues 286–328 (LRDL…TMVK) and 443–476 (NLDF…AKRQ). Basic and acidic residues predominate over residues 297 to 307 (KAKRQQEQQRE). A disordered region spans residues 297-339 (KAKRQQEQQRELEEDDENSEEEVEVDSHTMVKSGSESAGTMRA). Positions 308–320 (LEEDDENSEEEVE) are enriched in acidic residues. The segment covering 326–339 (MVKSGSESAGTMRA) has biased composition (polar residues). The SARAH domain occupies 438-485 (FDFLKNLDFEELQMRLTALDPMMEREIEELRQRYTAKRQPILDAMDAK).

The protein belongs to the protein kinase superfamily. STE Ser/Thr protein kinase family. STE20 subfamily. Homodimer; mediated via the coiled-coil region. Requires Mg(2+) as cofactor.

It is found in the cytoplasm. Its subcellular location is the nucleus. It catalyses the reaction L-seryl-[protein] + ATP = O-phospho-L-seryl-[protein] + ADP + H(+). The catalysed reaction is L-threonyl-[protein] + ATP = O-phospho-L-threonyl-[protein] + ADP + H(+). Inhibited by the C-terminal non-catalytic region. Activated by caspase-cleavage. Full activation also requires homodimerization and autophosphorylation of Thr-179. Its function is as follows. Stress-activated, pro-apoptotic kinase which, following caspase-cleavage, enters the nucleus and induces chromatin condensation followed by internucleosomal DNA fragmentation. Key component of the Hippo signaling pathway which plays a pivotal role in organ size control and tumor suppression by restricting proliferation and promoting apoptosis. The core of this pathway is composed of a kinase cascade wherein stk3/mst2 and stk4/mst1, in complex with its regulatory protein sav1, phosphorylates and activates lats1/2 in complex with its regulatory protein mob1, which in turn phosphorylates and inactivates yap1 oncoprotein and wwtr1/taz. Phosphorylation of yap1 by lats2 inhibits its translocation into the nucleus to regulate cellular genes important for cell proliferation, cell death, and cell migration. The sequence is that of Serine/threonine-protein kinase 3 (stk3) from Danio rerio (Zebrafish).